A 172-amino-acid chain; its full sequence is Large ribosomal subunit protein uL10 (172 aa).

It belongs to the universal ribosomal protein uL10 family. As to quaternary structure, part of the ribosomal stalk of the 50S ribosomal subunit. The N-terminus interacts with L11 and the large rRNA to form the base of the stalk. The C-terminus forms an elongated spine to which L12 dimers bind in a sequential fashion forming a multimeric L10(L12)X complex.

In terms of biological role, forms part of the ribosomal stalk, playing a central role in the interaction of the ribosome with GTP-bound translation factors. This Nitrobacter winogradskyi (strain ATCC 25391 / DSM 10237 / CIP 104748 / NCIMB 11846 / Nb-255) protein is Large ribosomal subunit protein uL10.